We begin with the raw amino-acid sequence, 354 residues long: Ferredoxin--NADP reductase 2 (354 aa).

T14, D33, Q41, Y46, A86, F121, D289, and T330 together coordinate FAD.

The protein belongs to the ferredoxin--NADP reductase type 2 family. Homodimer. It depends on FAD as a cofactor.

The enzyme catalyses 2 reduced [2Fe-2S]-[ferredoxin] + NADP(+) + H(+) = 2 oxidized [2Fe-2S]-[ferredoxin] + NADPH. The polypeptide is Ferredoxin--NADP reductase 2 (Christiangramia forsetii (strain DSM 17595 / CGMCC 1.15422 / KT0803) (Gramella forsetii)).